The primary structure comprises 340 residues: Probable complex I intermediate-associated protein 30, mitochondrial (340 aa).

This sequence belongs to the CIA30 family.

The protein localises to the mitochondrion. Functionally, chaperone protein involved in the assembly of the mitochondrial NADH:ubiquinone oxidoreductase complex (complex I). Required for normal growth and reproduction. In Caenorhabditis elegans, this protein is Probable complex I intermediate-associated protein 30, mitochondrial (nuaf-1).